The primary structure comprises 808 residues: DNA gyrase subunit B (808 aa).

Residues 429–544 (SELFIVEGDS…KGYLYIAQPP (116 aa)) enclose the Toprim domain. Residues Glu435, Asp509, and Asp511 each coordinate Mg(2+).

This sequence belongs to the type II topoisomerase GyrB family. As to quaternary structure, heterotetramer, composed of two GyrA and two GyrB chains. In the heterotetramer, GyrA contains the active site tyrosine that forms a transient covalent intermediate with DNA, while GyrB binds cofactors and catalyzes ATP hydrolysis. The cofactor is Mg(2+). It depends on Mn(2+) as a cofactor. Ca(2+) is required as a cofactor.

Its subcellular location is the cytoplasm. The enzyme catalyses ATP-dependent breakage, passage and rejoining of double-stranded DNA.. A type II topoisomerase that negatively supercoils closed circular double-stranded (ds) DNA in an ATP-dependent manner to modulate DNA topology and maintain chromosomes in an underwound state. Negative supercoiling favors strand separation, and DNA replication, transcription, recombination and repair, all of which involve strand separation. Also able to catalyze the interconversion of other topological isomers of dsDNA rings, including catenanes and knotted rings. Type II topoisomerases break and join 2 DNA strands simultaneously in an ATP-dependent manner. The polypeptide is DNA gyrase subunit B (Rickettsia bellii (strain RML369-C)).